The following is a 268-amino-acid chain: Testis-specific serine/threonine-protein kinase 3 (268 aa).

A Protein kinase domain is found at 10 to 265 (YQLGKTIGEG…IEEVSWHPWL (256 aa)). Residues 16–24 (IGEGTYSKV) and Lys-39 contribute to the ATP site. The Proton acceptor role is filled by Asp-134. Position 166 is a phosphoserine; by autocatalysis (Ser-166). Residue Thr-168 is modified to Phosphothreonine; by PDPK1.

This sequence belongs to the protein kinase superfamily. CAMK Ser/Thr protein kinase family. The cofactor is Mg(2+). Requires Mn(2+) as cofactor. Post-translationally, autophosphorylated at Ser-166. Phosphorylation at Thr-168 by PDPK1 activates the serine/threonine protein kinase activity. In terms of tissue distribution, developmentally expressed in testicular germ cells. In adult testis, expression was detected in round and condensing spermatids, but not in meiotic pachytene spermatocytes. Not expressed in brain, ovary, kidney, liver or early embryonic cells.

It is found in the cell projection. Its subcellular location is the cilium. The protein localises to the flagellum. The catalysed reaction is L-seryl-[protein] + ATP = O-phospho-L-seryl-[protein] + ADP + H(+). It catalyses the reaction L-threonyl-[protein] + ATP = O-phospho-L-threonyl-[protein] + ADP + H(+). Its activity is regulated as follows. Activated by phosphorylation on Thr-168 by PDPK1. Functionally, serine/threonine protein kinase required for spermatid development and male fertility. This Mus musculus (Mouse) protein is Testis-specific serine/threonine-protein kinase 3.